A 120-amino-acid chain; its full sequence is Putative ferric transport system permease-like protein AfuB (120 aa).

Topologically, residues 1 to 38 (MESLPGQIDKSLDEASLSLRAGSLRTITHILLPLLRPA) are cytoplasmic. Residues 1-102 (MESLPGQIDK…VVMLAIIFIF (102 aa)) form the ABC transmembrane type-1 domain. A helical membrane pass occupies residues 39-59 (ILSALIYSFVRAITTVSAIVF). Topologically, residues 60–81 (LVTPDTRVATAYILNRVEDGEY) are periplasmic. A helical membrane pass occupies residues 82–102 (GVAIAYGSILIVVMLAIIFIF). Topologically, residues 103 to 120 (DWLIGESRTSRSKAKNQA) are cytoplasmic.

This sequence belongs to the binding-protein-dependent transport system permease family. FbpB subfamily.

It localises to the cell inner membrane. Its function is as follows. A severely truncated paralog of the AfuB uptake protein, homologous only to the last 20% of the intact protein in Actinobacillus. The polypeptide is Putative ferric transport system permease-like protein AfuB (afuB) (Escherichia coli (strain K12)).